A 177-amino-acid polypeptide reads, in one-letter code: UPF0200 protein STK_09500 (177 aa).

Position 11–18 (11–18 (GMPGSGKG)) interacts with ATP.

Belongs to the UPF0200 family.

This is UPF0200 protein STK_09500 from Sulfurisphaera tokodaii (strain DSM 16993 / JCM 10545 / NBRC 100140 / 7) (Sulfolobus tokodaii).